Consider the following 399-residue polypeptide: MAKEKFVKNKPHVNIGTIGHVDHGKTTLSAAISAVLATKGLCELKDYDAIDNAPEERERGITIATSHIEYETENRHYAHVDCPGHADYVKNMITGAAQMDGAILVVSAADGPMPQTREHILLSRQVGVPYIVVFLNKEDMVDDAELLELVEMEVRELLSNYDFPGDDTPIVAGSALKALEEAKTGNVGEWGEKVLKLMAEVDRYIPTPERDVDKPFLMPVEDVFSIAGRGTVVTGRIERGVVKVGDEVEIVGIRNTQKTTVTGVEMFRKELDKGEAGDNVGVLLRGTKKEDVERGMVLCKIGSITPHTNFEGEVYVLSKEEGGRHTPFFNGYRPQFYVRTTDVTGSISLPEGVEMVMPGDNVKINVELIAPVALEEGTRFAIREGGRTVGAGVVTKITK.

One can recognise a tr-type G domain in the interval 10-209 (KPHVNIGTIG…EVDRYIPTPE (200 aa)). The interval 19–26 (GHVDHGKT) is G1. 19–26 (GHVDHGKT) serves as a coordination point for GTP. T26 contacts Mg(2+). Positions 60–64 (GITIA) are G2. Residues 81–84 (DCPG) form a G3 region. GTP-binding positions include 81 to 85 (DCPGH) and 136 to 139 (NKED). The segment at 136-139 (NKED) is G4. The G5 stretch occupies residues 174-176 (SAL).

The protein belongs to the TRAFAC class translation factor GTPase superfamily. Classic translation factor GTPase family. EF-Tu/EF-1A subfamily. In terms of assembly, monomer.

It is found in the cytoplasm. It catalyses the reaction GTP + H2O = GDP + phosphate + H(+). GTP hydrolase that promotes the GTP-dependent binding of aminoacyl-tRNA to the A-site of ribosomes during protein biosynthesis. The chain is Elongation factor Tu from Wolinella succinogenes (strain ATCC 29543 / DSM 1740 / CCUG 13145 / JCM 31913 / LMG 7466 / NCTC 11488 / FDC 602W) (Vibrio succinogenes).